The chain runs to 158 residues: Cyclic pyranopterin monophosphate synthase (158 aa).

Substrate contacts are provided by residues 74–76 (MCH) and 112–113 (ME). D127 is a catalytic residue.

It belongs to the MoaC family. In terms of assembly, homohexamer; trimer of dimers.

The enzyme catalyses (8S)-3',8-cyclo-7,8-dihydroguanosine 5'-triphosphate = cyclic pyranopterin phosphate + diphosphate. Its pathway is cofactor biosynthesis; molybdopterin biosynthesis. Functionally, catalyzes the conversion of (8S)-3',8-cyclo-7,8-dihydroguanosine 5'-triphosphate to cyclic pyranopterin monophosphate (cPMP). The sequence is that of Cyclic pyranopterin monophosphate synthase from Thermoanaerobacter pseudethanolicus (strain ATCC 33223 / 39E) (Clostridium thermohydrosulfuricum).